We begin with the raw amino-acid sequence, 249 residues long: MNKFNIENLDLFYGQNQALKNINLPIPAKQVTALIGPSGCGKSTLLRCLNRMNDLIEGVKITGLVNLDGNDIYGNIDVADLRIKVGMVFQKANPFPMSIYENVAYGLKAQGVKDKKVLDAVVEKSLRGAALWDEVKDRLKSHAFGLSGGQQQRLCIARTIAMEPDVILMDEPTSALDPIATHKVEELMETLKKDYTIVIVTHSMQQARRISDKTAFFLMGELVEHDDTQIIFSNPKDDRTQGYVNGDFG.

The region spanning 4–244 (FNIENLDLFY…PKDDRTQGYV (241 aa)) is the ABC transporter domain. 36 to 43 (GPSGCGKS) provides a ligand contact to ATP.

The protein belongs to the ABC transporter superfamily. Phosphate importer (TC 3.A.1.7) family. As to quaternary structure, the complex is composed of two ATP-binding proteins (PstB), two transmembrane proteins (PstC and PstA) and a solute-binding protein (PstS).

It localises to the cell inner membrane. The catalysed reaction is phosphate(out) + ATP + H2O = ADP + 2 phosphate(in) + H(+). Its function is as follows. Part of the ABC transporter complex PstSACB involved in phosphate import. Responsible for energy coupling to the transport system. The protein is Phosphate import ATP-binding protein PstB 1 of Aliivibrio fischeri (strain ATCC 700601 / ES114) (Vibrio fischeri).